The primary structure comprises 660 residues: Acyl-coenzyme A oxidase acox-1.3 (660 aa).

FAD contacts are provided by residues 146 to 149 (YAQT), 154 to 155 (GT), and G188. Substrate is bound by residues 282 to 285 (KIGY) and R292. Residues R317 and 337–340 (QQHR) each bind FAD. ATP contacts are provided by H339, S389, H393, and Q401. 430-431 (YE) contacts substrate. E431 (proton acceptor) is an active-site residue. Position 433 (E433) interacts with FAD. Residues 524–527 (RASR) and Y572 contribute to the ATP site. The short motif at 658 to 660 (AKL) is the Microbody targeting signal element.

This sequence belongs to the acyl-CoA oxidase family. In terms of assembly, forms a heterodimer with acox-1.1; the interaction may be important for the stability of acox-1.3. The cofactor is FAD.

Its subcellular location is the peroxisome. The enzyme catalyses asc-C7-CoA + O2 = asc-DeltaC7-CoA + H2O2. Its pathway is lipid metabolism; peroxisomal fatty acid beta-oxidation. Its activity is regulated as follows. Activated by ATP. ATP binding leads to a conformational change that promotes FAD cofactor binding and enzyme activity. ATP binding likely occurs during acox-1.3 folding and/or dimer formation. Involved in the first step of peroxisomal beta-oxidation by catalyzing the desaturation of fatty acid-derived side chains of ascaroside pheromones, which regulates development and behavior. Specifically, shortens ascarosides with a 7-carbon side chain (asc-C7). Does not catalyze the desaturation of fatty acids or hydroxylated fatty acids. Involved in the biosynthesis of asc-C6-MK (daumone 2) and asc-delta-C9 (daumone 3) but not asc-C7 (daumone 1); daumones are pheromones produced during unfavourable growth conditions which promote entry into the dauer stage. This is Acyl-coenzyme A oxidase acox-1.3 from Caenorhabditis elegans.